Consider the following 401-residue polypeptide: MTRHAAPILTTLLDTDAYKLHMQQAVFHRYYDVTVTAEFRCRGEDMLGIYADELVQQIANMASLTLTDNEFAYLSSLPFFKTDYLNWLRTFRYNPEQVTVQNLQGKLDIRISGPWREVILWEVPLLALISEVVHRHRSPQITPEQAVSRLKSKLEQFKRLTCDLDMSRFRLMDFGTRRRFSHDVQLAVVSTLKQDFPWLVGSSNYDIARRLNIAPVGTQAHEWFQAHQQISPTLENCQRAALQAWLDEYPDRLGIALTDCITTDAFLRDFGSEFAHAYQGLRHDSGDPFEWGEKAIAHYQQLNIDPLSKTLVFSDNLDLDKAVGLYRHFEQRINVIFGIGTRLSCDIPQVKPLNIVIKLVECNGKPVAKLSDSPGKTICHDKAFVRALRKAFDLPRVKKAS.

His221 carries the phosphohistidine; by autocatalysis modification.

Belongs to the NAPRTase family. In terms of processing, transiently phosphorylated on a His residue during the reaction cycle. Phosphorylation strongly increases the affinity for substrates and increases the rate of nicotinate D-ribonucleotide production. Dephosphorylation regenerates the low-affinity form of the enzyme, leading to product release.

It carries out the reaction nicotinate + 5-phospho-alpha-D-ribose 1-diphosphate + ATP + H2O = nicotinate beta-D-ribonucleotide + ADP + phosphate + diphosphate. The protein operates within cofactor biosynthesis; NAD(+) biosynthesis; nicotinate D-ribonucleotide from nicotinate: step 1/1. In terms of biological role, catalyzes the synthesis of beta-nicotinate D-ribonucleotide from nicotinate and 5-phospho-D-ribose 1-phosphate at the expense of ATP. The chain is Nicotinate phosphoribosyltransferase from Erwinia tasmaniensis (strain DSM 17950 / CFBP 7177 / CIP 109463 / NCPPB 4357 / Et1/99).